The chain runs to 325 residues: Probable tRNA-dihydrouridine synthase 2 (325 aa).

Residue 18-20 participates in FMN binding; sequence PME. The active-site Proton donor is the cysteine 105. FMN contacts are provided by residues lysine 143, 208–210, and 232–233; these read NGD and GR.

The protein belongs to the Dus family. The cofactor is FMN.

It carries out the reaction a 5,6-dihydrouridine in tRNA + NAD(+) = a uridine in tRNA + NADH + H(+). The catalysed reaction is a 5,6-dihydrouridine in tRNA + NADP(+) = a uridine in tRNA + NADPH + H(+). Catalyzes the synthesis of 5,6-dihydrouridine (D), a modified base found in the D-loop of most tRNAs, via the reduction of the C5-C6 double bond in target uridines. The sequence is that of Probable tRNA-dihydrouridine synthase 2 (dus2) from Bacillus subtilis (strain 168).